We begin with the raw amino-acid sequence, 234 residues long: Small ribosomal subunit protein eS4 (234 aa).

The region spanning 39–102 (MPLVVVLRDL…NANYRVVIGM (64 aa)) is the S4 RNA-binding domain.

It belongs to the eukaryotic ribosomal protein eS4 family.

This is Small ribosomal subunit protein eS4 from Methanocella arvoryzae (strain DSM 22066 / NBRC 105507 / MRE50).